We begin with the raw amino-acid sequence, 326 residues long: Putative HTH-type transcriptional regulator y4qH (326 aa).

In terms of domain architecture, HTH luxR-type spans 257–322 (AVQKIPALSL…VAAIKAISLG (66 aa)). The H-T-H motif DNA-binding region spans 281–300 (SWDIGVIMRISENTVNFHIK).

The protein belongs to the autoinducer-regulated transcriptional regulatory protein family.

The chain is Putative HTH-type transcriptional regulator y4qH from Sinorhizobium fredii (strain NBRC 101917 / NGR234).